An 899-amino-acid polypeptide reads, in one-letter code: MEVQLGLGRVYPRPPSKTYRGAFQNLFQSVREAIQNPGPRHPEAANIAPPGACLQQRQETSPRRRRRQQHTEDGSPQAHIRGPTGYLALEEEQQPSQQQAASEGHPESSCLPEPGAATAPGKGLPQQPPAPPDQDDSAAPSTLSLLGPTFPGLSSCSADIKDILNEAGTMQLLQQQQQQQQHQQQHQQHQQQQEVISEGSSARAREATGAPSSSKDSYLGGNSTISDSAKELCKAVSVSMGLGVEALEHLSPGEQLRGDCMYASLLGGPPAVRPTPCAPLPECKGLPLDEGPGKSTEETAEYSSFKGGYAKGLEGESLGCSGSSEAGSSGTLEIPSSLSLYKSGALDEAAAYQNRDYYNFPLALSGPPHPPPPTHPHARIKLENPLDYGSAWAAAAAQCRYGDLGSLHGGSVAGPSTGSPPATTSSSWHTLFTAEEGQLYGPGGGGGSSSPSDAGPVAPYGYTRPPQGLTSQESDYSASEVWYPGGVVNRVPYPSPNCVKSEMGPWMENYSGPYGDMRLDSTRDHVLPIDYYFPPQKTCLICGDEASGCHYGALTCGSCKVFFKRAAEGKQKYLCASRNDCTIDKFRRKNCPSCRLRKCYEAGMTLGARKLKKLGNLKLQEEGENSNAGSPTEDPSQKMTVSHIEGYECQPIFLNVLEAIEPGVVCAGHDNNQPDSFAALLSSLNELGERQLVHVVKWAKALPGFRNLHVDDQMAVIQYSWMGLMVFAMGWRSFTNVNSRMLYFAPDLVFNEYRMHKSRMYSQCVRMRHLSQEFGWLQITPQEFLCMKALLLFSIIPVDGLKNQKFFDELRMNYIKELDRIIACKRKNPTSCSRRFYQLTKLLDSVQPIARELHQFTFDLLIKSHMVSVDFPEMMAEIISVQVPKILSGKVKPIYFHTQ.

The segment at 1–537 is modulating; that stretch reads MEVQLGLGRV…PIDYYFPPQK (537 aa). The interaction with ZNF318 stretch occupies residues 1-566; sequence MEVQLGLGRV…GSCKVFFKRA (566 aa). Disordered stretches follow at residues 35–146 and 175–222; these read QNPG…LSLL and QQQQ…LGGN. At Ser-61 the chain carries Phosphoserine; by CDK9. Ser-75 is subject to Phosphoserine. 2 stretches are compositionally biased toward low complexity: residues 94–103 and 175–193; these read QPSQQQAASE and QQQQ…QQQQ. The segment covering 210-222 has biased composition (polar residues); that stretch reads APSSSKDSYLGGN. Tyr-218 bears the Phosphotyrosine; by CSK mark. Ser-251 bears the Phosphoserine mark. Tyr-262 is subject to Phosphotyrosine; by CSK and TNK2. Phosphotyrosine; by CSK is present on residues Tyr-302, Tyr-341, Tyr-352, and Tyr-357. At Tyr-358 the chain carries Phosphotyrosine; by CSK and TNK2. Residue Lys-381 forms a Glycyl lysine isopeptide (Lys-Gly) (interchain with G-Cter in SUMO) linkage. At Tyr-388 the chain carries Phosphotyrosine; by CSK. Positions 436-471 are disordered; the sequence is EGQLYGPGGGGGSSSPSDAGPVAPYGYTRPPQGLTS. Residue Lys-500 forms a Glycyl lysine isopeptide (Lys-Gly) (interchain with G-Cter in SUMO) linkage. Phosphotyrosine; by CSK is present on residues Tyr-514 and Tyr-531. The segment at 531–898 is interaction with LPXN; that stretch reads YYFPPQKTCL…GKVKPIYFHT (368 aa). Residues 538–611 constitute a DNA-binding region (nuclear receptor); that stretch reads TCLICGDEAS…AGMTLGARKL (74 aa). NR C4-type zinc fingers lie at residues 539–559 and 575–599; these read CLIC…CGSC and CASR…LRKC. The tract at residues 551 to 641 is interaction with HIPK3; that stretch reads YGALTCGSCK…TEDPSQKMTV (91 aa). The interaction with CCAR1 stretch occupies residues 571–898; it reads QKYLCASRND…GKVKPIYFHT (328 aa). The interaction with KAT7 stretch occupies residues 604–898; it reads MTLGARKLKK…GKVKPIYFHT (295 aa). The residue at position 630 (Ser-630) is a Phosphoserine. Residues 648–879 form the NR LBD domain; the sequence is ECQPIFLNVL…DFPEMMAEII (232 aa). Residues Asn-685 and Arg-732 each coordinate 17beta-hydroxy-5alpha-androstan-3-one. Glycyl lysine isopeptide (Lys-Gly) (interchain with G-Cter in ubiquitin) cross-links involve residues Lys-825 and Lys-827. Thr-857 lines the 17beta-hydroxy-5alpha-androstan-3-one pocket. Tyr-895 is modified (phosphotyrosine; by CSK).

The protein belongs to the nuclear hormone receptor family. NR3 subfamily. Binds DNA as a homodimer. Part of a ternary complex containing AR, EFCAB6/DJBP and PARK7. Interacts with HIPK3 and NR0B2 in the presence of androgen. The ligand binding domain interacts with KAT7/HBO1 in the presence of dihydrotestosterone. Interacts with EFCAB6/DJBP, PQBP1, RANBP9, SPDEF, SRA1, TGFB1I1, ZNF318 and RREB1. The AR N-terminal poly-Gln region binds Ran resulting in enhancement of AR-mediated transactivation. Ran-binding decreases as the poly-Gln length increases. Interacts with ZMIZ1/ZIMP10 and ZMIZ2/ZMIP7 which both enhance its transactivation activity. Interacts with RBAK. Interacts via the ligand-binding domain with LXXLL and FXXLF motifs from NCOA1, NCOA2, NCOA3 and MAGEA11. Interacts (via nuclear receptor DNA binding domain and nuclear receptor ligand binding domain) with NCOA4. Interacts with HIP1 (via coiled coil domain). Interacts with SLC30A9 and RAD54L2/ARIP4. Interacts with MACROD1 (via macro domain). Interacts (via ligand-binding domain) with TRIM68. Interacts with TNK2. Interacts with USP26. Interacts with RNF6. Interacts (regulated by RNF6 probably through polyubiquitination) with RNF14; regulates AR transcriptional activity. Interacts with PRMT2 and TRIM24. Interacts with RACK1. Interacts with RANBP10; this interaction enhances hormone-induced AR transcriptional activity. Interacts with PRPF6 in a hormone-independent way; this interaction enhances hormone-induced AR transcriptional activity. Interacts with STK4/MST1. Interacts with ZIPK/DAPK3. Interacts with LPXN. Interacts with MAK. Part of a complex containing AR, MAK and NCOA3. Interacts with CRY1. Interacts with CCAR1 and GATA2. Interacts with BUD31. Interacts with ARID4A. Interacts with ARID4B. Interacts (via NR LBD domain) with ZBTB7A; the interaction is direct and androgen-dependent. Interacts with NCOR1. Interacts with NCOR2. Interacts with CRY2 in a ligand-dependent manner. Post-translationally, phosphorylated in prostate cancer cells in response to several growth factors including EGF. Phosphorylation is induced by c-Src kinase (CSK). Tyr-514 is one of the major phosphorylation sites and an increase in phosphorylation and Src kinase activity is associated with prostate cancer progression. Phosphorylation by TNK2 enhances the DNA-binding and transcriptional activity. Phosphorylation at Ser-61 by CDK9 regulates AR promoter selectivity and cell growth. Phosphorylation by PAK6 leads to AR-mediated transcription inhibition. In terms of processing, sumoylated on Lys-381 (major) and Lys-500. Ubiquitinated. Deubiquitinated by USP26. 'Lys-6' and 'Lys-27'-linked polyubiquitination by RNF6 modulates AR transcriptional activity and specificity. Palmitoylated by ZDHHC7 and ZDHHC21. Palmitoylation is required for plasma membrane targeting and for rapid intracellular signaling via ERK and AKT kinases and cAMP generation.

Its subcellular location is the nucleus. It localises to the cytoplasm. Functionally, steroid hormone receptors are ligand-activated transcription factors that regulate eukaryotic gene expression and affect cellular proliferation and differentiation in target tissues. Transcription factor activity is modulated by bound coactivator and corepressor proteins like ZBTB7A that recruits NCOR1 and NCOR2 to the androgen response elements/ARE on target genes, negatively regulating androgen receptor signaling and androgen-induced cell proliferation. Transcription activation is also down-regulated by NR0B2. Activated, but not phosphorylated, by HIPK3 and ZIPK/DAPK3. The polypeptide is Androgen receptor (Ar) (Mus musculus (Mouse)).